Here is a 296-residue protein sequence, read N- to C-terminus: GTPase Era (296 aa).

Residues 7–174 form the Era-type G domain; that stretch reads KCSMSAIVGA…VDYLCETSPY (168 aa). The interval 15-22 is G1; it reads GATNAGKS. Residue 15-22 participates in GTP binding; the sequence is GATNAGKS. Residues 41–45 are G2; the sequence is QTTRV. Positions 62 to 65 are G3; sequence DTPG. Residues 62 to 66 and 124 to 127 each bind GTP; these read DTPGI and NKID. Positions 124 to 127 are G4; it reads NKID. The tract at residues 153–155 is G5; it reads ISA. Residues 205-282 enclose the KH type-2 domain; the sequence is LRHELPYSLS…HLFLFVKVRE (78 aa).

The protein belongs to the TRAFAC class TrmE-Era-EngA-EngB-Septin-like GTPase superfamily. Era GTPase family. As to quaternary structure, monomer.

It is found in the cytoplasm. The protein resides in the cell inner membrane. Functionally, an essential GTPase that binds both GDP and GTP, with rapid nucleotide exchange. Plays a role in 16S rRNA processing and 30S ribosomal subunit biogenesis and possibly also in cell cycle regulation and energy metabolism. The sequence is that of GTPase Era from Ehrlichia ruminantium (strain Welgevonden).